The primary structure comprises 458 residues: NADH-quinone oxidoreductase subunit N (458 aa).

Transmembrane regions (helical) follow at residues 4–24, 30–50, 62–82, 94–114, 118–138, 153–173, 194–214, 235–255, 261–281, 290–310, 318–338, 361–381, 397–417, and 438–458; these read LLPE…AVII, IISN…FKYS, GINI…SMII, LKFE…VAIS, FLLL…LAGF, FILG…IYGF, LGLI…LSSV, FTAA…KLII, INYN…AFGA, LMAY…LLHN, LLYI…LIML, IAAI…LTGF, FILA…YLKV, and LLLI…IISF.

It belongs to the complex I subunit 2 family. NDH-1 is composed of 14 different subunits. Subunits NuoA, H, J, K, L, M, N constitute the membrane sector of the complex.

The protein resides in the cell inner membrane. The catalysed reaction is a quinone + NADH + 5 H(+)(in) = a quinol + NAD(+) + 4 H(+)(out). Its function is as follows. NDH-1 shuttles electrons from NADH, via FMN and iron-sulfur (Fe-S) centers, to quinones in the respiratory chain. The immediate electron acceptor for the enzyme in this species is believed to be ubiquinone. Couples the redox reaction to proton translocation (for every two electrons transferred, four hydrogen ions are translocated across the cytoplasmic membrane), and thus conserves the redox energy in a proton gradient. The sequence is that of NADH-quinone oxidoreductase subunit N from Rickettsia felis (strain ATCC VR-1525 / URRWXCal2) (Rickettsia azadi).